A 40-amino-acid chain; its full sequence is Large ribosomal subunit protein bL36 (40 aa).

This sequence belongs to the bacterial ribosomal protein bL36 family.

This Corynebacterium diphtheriae (strain ATCC 700971 / NCTC 13129 / Biotype gravis) protein is Large ribosomal subunit protein bL36.